A 365-amino-acid chain; its full sequence is Aminomethyltransferase (365 aa).

Belongs to the GcvT family. As to quaternary structure, the glycine cleavage system is composed of four proteins: P, T, L and H.

The enzyme catalyses N(6)-[(R)-S(8)-aminomethyldihydrolipoyl]-L-lysyl-[protein] + (6S)-5,6,7,8-tetrahydrofolate = N(6)-[(R)-dihydrolipoyl]-L-lysyl-[protein] + (6R)-5,10-methylene-5,6,7,8-tetrahydrofolate + NH4(+). Functionally, the glycine cleavage system catalyzes the degradation of glycine. The chain is Aminomethyltransferase from Serratia proteamaculans (strain 568).